A 502-amino-acid chain; its full sequence is Aspartyl/glutamyl-tRNA(Asn/Gln) amidotransferase subunit B (502 aa).

This sequence belongs to the GatB/GatE family. GatB subfamily. In terms of assembly, heterotrimer of A, B and C subunits.

It catalyses the reaction L-glutamyl-tRNA(Gln) + L-glutamine + ATP + H2O = L-glutaminyl-tRNA(Gln) + L-glutamate + ADP + phosphate + H(+). The enzyme catalyses L-aspartyl-tRNA(Asn) + L-glutamine + ATP + H2O = L-asparaginyl-tRNA(Asn) + L-glutamate + ADP + phosphate + 2 H(+). In terms of biological role, allows the formation of correctly charged Asn-tRNA(Asn) or Gln-tRNA(Gln) through the transamidation of misacylated Asp-tRNA(Asn) or Glu-tRNA(Gln) in organisms which lack either or both of asparaginyl-tRNA or glutaminyl-tRNA synthetases. The reaction takes place in the presence of glutamine and ATP through an activated phospho-Asp-tRNA(Asn) or phospho-Glu-tRNA(Gln). In Brucella suis (strain ATCC 23445 / NCTC 10510), this protein is Aspartyl/glutamyl-tRNA(Asn/Gln) amidotransferase subunit B.